The chain runs to 552 residues: Cation/acetate symporter ActP (552 aa).

Transmembrane regions (helical) follow at residues 6–26 (LLAV…AIAG), 35–55 (MEAI…TYWA), 78–98 (GLAM…SALV), 103–123 (FDGL…LFLI), 151–171 (LSAC…MVGA), 185–205 (VAVV…GMLA), 208–228 (WVQI…AIMV), 264–284 (ISAL…PHIL), 305–325 (GLMG…ILLV), 357–377 (LFLG…VAGL), 407–427 (VSKI…ILFE), 431–451 (IAFM…PIIL), 467–487 (GGWL…TIWV), and 496–516 (IFPY…GTWL).

It belongs to the sodium:solute symporter (SSF) (TC 2.A.21) family.

Its subcellular location is the cell inner membrane. Transports acetate. This chain is Cation/acetate symporter ActP, found in Erwinia tasmaniensis (strain DSM 17950 / CFBP 7177 / CIP 109463 / NCPPB 4357 / Et1/99).